Consider the following 423-residue polypeptide: Kynureninase (423 aa).

Pyridoxal 5'-phosphate contacts are provided by residues Leu-105, Ser-106, 133 to 136 (FPSD), Asp-218, His-221, and Tyr-243. Lys-244 bears the N6-(pyridoxal phosphate)lysine mark. Pyridoxal 5'-phosphate is bound by residues Trp-273 and Asn-301.

Belongs to the kynureninase family. As to quaternary structure, homodimer. Pyridoxal 5'-phosphate serves as cofactor.

The catalysed reaction is L-kynurenine + H2O = anthranilate + L-alanine + H(+). It catalyses the reaction 3-hydroxy-L-kynurenine + H2O = 3-hydroxyanthranilate + L-alanine + H(+). Its pathway is amino-acid degradation; L-kynurenine degradation; L-alanine and anthranilate from L-kynurenine: step 1/1. The protein operates within cofactor biosynthesis; NAD(+) biosynthesis; quinolinate from L-kynurenine: step 2/3. Its function is as follows. Catalyzes the cleavage of L-kynurenine (L-Kyn) and L-3-hydroxykynurenine (L-3OHKyn) into anthranilic acid (AA) and 3-hydroxyanthranilic acid (3-OHAA), respectively. The sequence is that of Kynureninase from Xanthomonas oryzae pv. oryzae (strain MAFF 311018).